The primary structure comprises 324 residues: Cytochrome c biogenesis protein CcsA (324 aa).

A run of 8 helical transmembrane segments spans residues 17–37 (IISVVIIIQLMTFFVHEIPAL), 44–64 (GMIATFLSITGLLIIRWIYSG), 68–88 (LSNLYESLMFLSWSFAIIHMI), 99–119 (YLSAITIPSAIFTQAFATSGL), 145–165 (MLLSYAALLVGSLFSIALLVI), 230–250 (VISIGFSFLTIGILSGAVWAN), 264–278 (TWAFITWTIYAIYSH), and 291–311 (AIVASIGFFIIWICYFGVNLL).

Belongs to the CcmF/CycK/Ccl1/NrfE/CcsA family. In terms of assembly, may interact with Ccs1.

It is found in the plastid. Its subcellular location is the chloroplast thylakoid membrane. In terms of biological role, required during biogenesis of c-type cytochromes (cytochrome c6 and cytochrome f) at the step of heme attachment. The sequence is that of Cytochrome c biogenesis protein CcsA from Lemna minor (Common duckweed).